We begin with the raw amino-acid sequence, 275 residues long: 5'-nucleotidase SurE (275 aa).

A divalent metal cation is bound by residues aspartate 12, aspartate 13, serine 44, and asparagine 102.

It belongs to the SurE nucleotidase family. A divalent metal cation serves as cofactor.

Its subcellular location is the cytoplasm. The enzyme catalyses a ribonucleoside 5'-phosphate + H2O = a ribonucleoside + phosphate. Nucleotidase that shows phosphatase activity on nucleoside 5'-monophosphates. The protein is 5'-nucleotidase SurE of Synechococcus sp. (strain RCC307).